The primary structure comprises 156 residues: Small ribosomal subunit protein uS7 (156 aa).

This sequence belongs to the universal ribosomal protein uS7 family. As to quaternary structure, part of the 30S ribosomal subunit. Contacts proteins S9 and S11.

In terms of biological role, one of the primary rRNA binding proteins, it binds directly to 16S rRNA where it nucleates assembly of the head domain of the 30S subunit. Is located at the subunit interface close to the decoding center, probably blocks exit of the E-site tRNA. This is Small ribosomal subunit protein uS7 from Brucella anthropi (strain ATCC 49188 / DSM 6882 / CCUG 24695 / JCM 21032 / LMG 3331 / NBRC 15819 / NCTC 12168 / Alc 37) (Ochrobactrum anthropi).